The chain runs to 239 residues: Ribonuclease PH (239 aa).

Phosphate-binding positions include Arg86 and 124–126 (GTR).

Belongs to the RNase PH family. As to quaternary structure, homohexameric ring arranged as a trimer of dimers.

It carries out the reaction tRNA(n+1) + phosphate = tRNA(n) + a ribonucleoside 5'-diphosphate. Functionally, phosphorolytic 3'-5' exoribonuclease that plays an important role in tRNA 3'-end maturation. Removes nucleotide residues following the 3'-CCA terminus of tRNAs; can also add nucleotides to the ends of RNA molecules by using nucleoside diphosphates as substrates, but this may not be physiologically important. Probably plays a role in initiation of 16S rRNA degradation (leading to ribosome degradation) during starvation. This is Ribonuclease PH from Rhizobium etli (strain ATCC 51251 / DSM 11541 / JCM 21823 / NBRC 15573 / CFN 42).